A 140-amino-acid polypeptide reads, in one-letter code: Large ribosomal subunit protein uL11 (140 aa).

Belongs to the universal ribosomal protein uL11 family. Part of the ribosomal stalk of the 50S ribosomal subunit. Interacts with L10 and the large rRNA to form the base of the stalk. L10 forms an elongated spine to which L12 dimers bind in a sequential fashion forming a multimeric L10(L12)X complex. Post-translationally, one or more lysine residues are methylated.

In terms of biological role, forms part of the ribosomal stalk which helps the ribosome interact with GTP-bound translation factors. This is Large ribosomal subunit protein uL11 from Nitratidesulfovibrio vulgaris (strain DSM 19637 / Miyazaki F) (Desulfovibrio vulgaris).